The following is a 397-amino-acid chain: 1-deoxy-D-xylulose 5-phosphate reductoisomerase (397 aa).

7 residues coordinate NADPH: Thr17, Gly18, Ser19, Ile20, Ala45, Asn47, and Asn130. Position 131 (Lys131) interacts with 1-deoxy-D-xylulose 5-phosphate. Position 132 (Glu132) interacts with NADPH. Position 156 (Asp156) interacts with Mn(2+). 1-deoxy-D-xylulose 5-phosphate is bound by residues Ser157, Glu158, Ser182, and His205. A Mn(2+)-binding site is contributed by Glu158. Gly211 serves as a coordination point for NADPH. Residues Ser218, Asn223, Lys224, and Glu227 each coordinate 1-deoxy-D-xylulose 5-phosphate. Glu227 is a binding site for Mn(2+).

Belongs to the DXR family. Mg(2+) is required as a cofactor. The cofactor is Mn(2+).

It catalyses the reaction 2-C-methyl-D-erythritol 4-phosphate + NADP(+) = 1-deoxy-D-xylulose 5-phosphate + NADPH + H(+). The protein operates within isoprenoid biosynthesis; isopentenyl diphosphate biosynthesis via DXP pathway; isopentenyl diphosphate from 1-deoxy-D-xylulose 5-phosphate: step 1/6. Its function is as follows. Catalyzes the NADPH-dependent rearrangement and reduction of 1-deoxy-D-xylulose-5-phosphate (DXP) to 2-C-methyl-D-erythritol 4-phosphate (MEP). The protein is 1-deoxy-D-xylulose 5-phosphate reductoisomerase of Agrobacterium fabrum (strain C58 / ATCC 33970) (Agrobacterium tumefaciens (strain C58)).